Consider the following 541-residue polypeptide: Arginine--tRNA ligase (541 aa).

Positions 119 to 129 (ANPTGPLHIGH) match the 'HIGH' region motif.

This sequence belongs to the class-I aminoacyl-tRNA synthetase family. In terms of assembly, monomer.

The protein resides in the cytoplasm. It carries out the reaction tRNA(Arg) + L-arginine + ATP = L-arginyl-tRNA(Arg) + AMP + diphosphate. The sequence is that of Arginine--tRNA ligase (argS) from Helicobacter pylori (strain J99 / ATCC 700824) (Campylobacter pylori J99).